We begin with the raw amino-acid sequence, 444 residues long: Tubulin beta-4 chain (444 aa).

8 residues coordinate GTP: Gln11, Glu69, Ser138, Gly142, Thr143, Gly144, Asn204, and Asn226. A Mg(2+)-binding site is contributed by Glu69.

This sequence belongs to the tubulin family. As to quaternary structure, dimer of alpha and beta chains. A typical microtubule is a hollow water-filled tube with an outer diameter of 25 nm and an inner diameter of 15 nM. Alpha-beta heterodimers associate head-to-tail to form protofilaments running lengthwise along the microtubule wall with the beta-tubulin subunit facing the microtubule plus end conferring a structural polarity. Microtubules usually have 13 protofilaments but different protofilament numbers can be found in some organisms and specialized cells. Mg(2+) is required as a cofactor.

The protein resides in the cytoplasm. It is found in the cytoskeleton. Tubulin is the major constituent of microtubules, a cylinder consisting of laterally associated linear protofilaments composed of alpha- and beta-tubulin heterodimers. Microtubules grow by the addition of GTP-tubulin dimers to the microtubule end, where a stabilizing cap forms. Below the cap, tubulin dimers are in GDP-bound state, owing to GTPase activity of alpha-tubulin. This is Tubulin beta-4 chain (TUBB4) from Arabidopsis thaliana (Mouse-ear cress).